We begin with the raw amino-acid sequence, 221 residues long: Uracil-DNA glycosylase 1 (221 aa).

D61 (proton acceptor) is an active-site residue.

Belongs to the uracil-DNA glycosylase (UDG) superfamily. UNG family.

The protein localises to the cytoplasm. It carries out the reaction Hydrolyzes single-stranded DNA or mismatched double-stranded DNA and polynucleotides, releasing free uracil.. Its function is as follows. Excises uracil residues from the DNA which can arise as a result of misincorporation of dUMP residues by DNA polymerase or due to deamination of cytosine. In Listeria monocytogenes serotype 4b (strain F2365), this protein is Uracil-DNA glycosylase 1.